The following is a 344-amino-acid chain: BURP domain-containing protein 16 (344 aa).

The N-terminal stretch at 1 to 25 is a signal peptide; sequence MATSFLFSLILLLITALSLPFPLHA. Asn90, Asn120, Asn181, and Asn333 each carry an N-linked (GlcNAc...) asparagine glycan. Residues 128–341 enclose the BURP domain; the sequence is FFREQELKEG…FNGSMTWVIA (214 aa).

Expressed in roots, stems, leaves and panicles.

This chain is BURP domain-containing protein 16 (BURP16), found in Oryza sativa subsp. japonica (Rice).